Here is a 77-residue protein sequence, read N- to C-terminus: U14-theraphotoxin-Cg1c (77 aa).

Residues 1-21 (MNTSDPPAVLRIAAITLLCTA) form the signal peptide. The propeptide occupies 22–49 (SESVEQNPLIPFENAVLGSYAKMASEKR). 2 cysteine pairs are disulfide-bonded: C50/C64 and C57/C69.

This sequence belongs to the neurotoxin 10 (Hwtx-1) family. 65 (Jztx-21) subfamily. In terms of tissue distribution, expressed by the venom gland.

Its subcellular location is the secreted. Functionally, probable ion channel inhibitor. In Chilobrachys guangxiensis (Chinese earth tiger tarantula), this protein is U14-theraphotoxin-Cg1c.